Consider the following 134-residue polypeptide: Small ribosomal subunit protein bS6 (134 aa).

A disordered region spans residues 99–134; the sequence is EPSAMMQKRDRDERKDRERGRRRDDDGYVGERNEEG. Residues 105 to 134 show a composition bias toward basic and acidic residues; sequence QKRDRDERKDRERGRRRDDDGYVGERNEEG.

Belongs to the bacterial ribosomal protein bS6 family.

Functionally, binds together with bS18 to 16S ribosomal RNA. The protein is Small ribosomal subunit protein bS6 of Methylobacterium sp. (strain 4-46).